Reading from the N-terminus, the 101-residue chain is Rho GTPase-activating protein 39 (101 aa).

The Rho-GAP domain occupies 1–96; the sequence is YEQCIAHYES…VLIQHLDTSF (96 aa).

Preoptic area and testis.

The protein is Rho GTPase-activating protein 39 (Arhgap39) of Rattus norvegicus (Rat).